The primary structure comprises 274 residues: Acyl-[acyl-carrier-protein]--UDP-N-acetylglucosamine O-acyltransferase (274 aa).

The protein belongs to the transferase hexapeptide repeat family. LpxA subfamily. In terms of assembly, homotrimer.

Its subcellular location is the cytoplasm. The enzyme catalyses a (3R)-hydroxyacyl-[ACP] + UDP-N-acetyl-alpha-D-glucosamine = a UDP-3-O-[(3R)-3-hydroxyacyl]-N-acetyl-alpha-D-glucosamine + holo-[ACP]. It functions in the pathway glycolipid biosynthesis; lipid IV(A) biosynthesis; lipid IV(A) from (3R)-3-hydroxytetradecanoyl-[acyl-carrier-protein] and UDP-N-acetyl-alpha-D-glucosamine: step 1/6. Its function is as follows. Involved in the biosynthesis of lipid A, a phosphorylated glycolipid that anchors the lipopolysaccharide to the outer membrane of the cell. The polypeptide is Acyl-[acyl-carrier-protein]--UDP-N-acetylglucosamine O-acyltransferase (Bartonella henselae (strain ATCC 49882 / DSM 28221 / CCUG 30454 / Houston 1) (Rochalimaea henselae)).